The following is a 259-amino-acid chain: Tryptophan synthase alpha chain (259 aa).

Active-site proton acceptor residues include Glu48 and Asp59.

It belongs to the TrpA family. As to quaternary structure, tetramer of two alpha and two beta chains.

The catalysed reaction is (1S,2R)-1-C-(indol-3-yl)glycerol 3-phosphate + L-serine = D-glyceraldehyde 3-phosphate + L-tryptophan + H2O. Its pathway is amino-acid biosynthesis; L-tryptophan biosynthesis; L-tryptophan from chorismate: step 5/5. In terms of biological role, the alpha subunit is responsible for the aldol cleavage of indoleglycerol phosphate to indole and glyceraldehyde 3-phosphate. In Syntrophomonas wolfei subsp. wolfei (strain DSM 2245B / Goettingen), this protein is Tryptophan synthase alpha chain.